A 226-amino-acid polypeptide reads, in one-letter code: Cytidylate kinase (226 aa).

12 to 20 is a binding site for ATP; that stretch reads GPSGAGKGT.

This sequence belongs to the cytidylate kinase family. Type 1 subfamily.

The protein resides in the cytoplasm. The catalysed reaction is CMP + ATP = CDP + ADP. It catalyses the reaction dCMP + ATP = dCDP + ADP. The sequence is that of Cytidylate kinase from Vibrio vulnificus (strain CMCP6).